Here is a 340-residue protein sequence, read N- to C-terminus: SH2 domain-containing adapter protein D (340 aa).

Disordered regions lie at residues 1-77 (MAKW…PKHR), 94-186 (GGPG…QPWE), and 198-230 (VQFD…ERVD). Positions 98–108 (EELEADTEYLD) are enriched in acidic residues. The span at 171 to 186 (PQEDERPADEYDQPWE) shows a compositional bias: basic and acidic residues. One can recognise an SH2 domain in the interval 240-335 (WFHGPLNRAD…AEHLALLYPV (96 aa)).

Tyrosine phosphorylated by ABL.

Functionally, may function as an adapter protein. The chain is SH2 domain-containing adapter protein D (SHD) from Homo sapiens (Human).